Consider the following 133-residue polypeptide: Basic phospholipase A2 beta-bungarotoxin A-AL2 chain (133 aa).

The signal sequence occupies residues 1 to 5; it reads FLLGA. The propeptide occupies 6–13; sequence ANIPPHPL. Cystine bridges form between C40/C132, C42/C58, C57/C113, C64/C106, C74/C99, and C92/C104. Residues Y41, G43, and G45 each contribute to the Ca(2+) site. The active site involves H61. Residue D62 participates in Ca(2+) binding. The active site involves D107.

Belongs to the phospholipase A2 family. Group I subfamily. D49 sub-subfamily. Heterodimer; disulfide-linked. The A chains have phospholipase A2 activity and the B chains show homology with the basic protease inhibitors. Ca(2+) is required as a cofactor. In terms of tissue distribution, expressed by the venom gland.

The protein resides in the secreted. The catalysed reaction is a 1,2-diacyl-sn-glycero-3-phosphocholine + H2O = a 1-acyl-sn-glycero-3-phosphocholine + a fatty acid + H(+). In terms of biological role, snake venom phospholipase A2 (PLA2) that inhibits neuromuscular transmission by blocking acetylcholine release from the nerve termini. PLA2 catalyzes the calcium-dependent hydrolysis of the 2-acyl groups in 3-sn-phosphoglycerides. In Bungarus multicinctus (Many-banded krait), this protein is Basic phospholipase A2 beta-bungarotoxin A-AL2 chain.